An 890-amino-acid chain; its full sequence is Translation initiation factor IF-2 (890 aa).

The interval 45 to 303 (LIDHLNQKNS…SLQQGFQKPA (259 aa)) is disordered. Polar residues predominate over residues 67–81 (STLNIPGTGGKSKSV). A compositionally biased stretch (basic and acidic residues) spans 92–217 (VKRDPQEAER…RMAEENKWTD (126 aa)). The span at 252-266 (GRGRNAKAARPKKGN) shows a compositional bias: basic residues. Positions 267 to 280 (KHAESKADREEARA) are enriched in basic and acidic residues. A tr-type G domain is found at 389–558 (PRAPVVTIMG…LLQAEVLELK (170 aa)). Positions 398–405 (GHVDHGKT) are G1. 398 to 405 (GHVDHGKT) lines the GTP pocket. Positions 423 to 427 (GITQH) are G2. Positions 444 to 447 (DTPG) are G3. Residues 444-448 (DTPGH) and 498-501 (NKID) each bind GTP. The G4 stretch occupies residues 498–501 (NKID). Residues 534–536 (SAK) form a G5 region. Lys808 carries the post-translational modification N6-acetyllysine.

It belongs to the TRAFAC class translation factor GTPase superfamily. Classic translation factor GTPase family. IF-2 subfamily.

The protein localises to the cytoplasm. Its function is as follows. One of the essential components for the initiation of protein synthesis. Protects formylmethionyl-tRNA from spontaneous hydrolysis and promotes its binding to the 30S ribosomal subunits. Also involved in the hydrolysis of GTP during the formation of the 70S ribosomal complex. The protein is Translation initiation factor IF-2 of Shigella boydii serotype 18 (strain CDC 3083-94 / BS512).